The sequence spans 235 residues: N-alpha-acetyltransferase 10 (235 aa).

M1 carries the N-acetylmethionine modification. An interaction with NAA15 region spans residues 1–58; that stretch reads MNIRNARPEDLMNMQHCNLLCLPENYQMKYYFYHGLSWPQLSYIAEDENGKIVGYVLA. The N-acetyltransferase domain occupies 1–152; that stretch reads MNIRNARPED…DAYAMKRDLT (152 aa). K136 is modified (N6-acetyllysine; by autocatalysis). Positions 196–213 are enriched in basic and acidic residues; that stretch reads EEKGLAAEDSGGDSKDLS. Residues 196-235 form a disordered region; it reads EEKGLAAEDSGGDSKDLSEVSETTESTDVKDSSEASDSAS. The residue at position 205 (S205) is a Phosphoserine. Position 209 is a phosphoserine; by IKKB (S209). Phosphoserine occurs at positions 213 and 216.

This sequence belongs to the acetyltransferase family. ARD1 subfamily. As to quaternary structure, component of the N-terminal acetyltransferase A complex (also called the NatA complex) composed of NAA10 and NAA15. Interacts with NAA15. Component of the N-terminal acetyltransferase A (NatA)/HYPK complex at least composed of NAA10, NAA15 and HYPK, which has N-terminal acetyltransferase activity. In complex with NAA15, interacts with HYPK. Component of the N-terminal acetyltransferase E (NatE) complex at least composed of NAA10, NAA15 and NAA50. Within the complex interacts with NAA15; the interaction is required for binding to NAAT50. Interacts with NAAT50. The interaction of the NatA complex with NAA50 reduces the acetylation activity of the NatA complex. Component of the N-terminal acetyltransferase E (NatE)/HYPK complex at least composed of NAA10, NAA15, NAA50 and HYPK. In complex with NAA15, interacts with HYPK; the interaction with HYPK reduces the capacity of the NatA complex to interact with NAA50. Interacts with HIF1A (via its ODD domain); the interaction increases HIF1A protein stability during normoxia, an down-regulates it when induced by hypoxia. Interacts with the ribosome. Binds to MYLK. Interacts with NAA16. Interacts (via its C-terminal domain) with TSC2, leading to its acetylation. Interacts with IKBKB. Interacts with HSPA1A and HSPA1B leading to its acetylation. Post-translationally, cleaved by caspases during apoptosis. Phosphorylation by IKBKB/IKKB at Ser-209 destabilises NAA10 and promotes its proteasome-mediated degradation. In terms of processing, autoacetylated at Lys-136 which stimulates its catalytic activity. As to expression, ubiquitous.

The protein localises to the cytoplasm. It is found in the nucleus. It catalyses the reaction N-terminal glycyl-[protein] + acetyl-CoA = N-terminal N(alpha)-acetylglycyl-[protein] + CoA + H(+). The enzyme catalyses N-terminal L-alanyl-[protein] + acetyl-CoA = N-terminal N(alpha)-acetyl-L-alanyl-[protein] + CoA + H(+). The catalysed reaction is N-terminal L-seryl-[protein] + acetyl-CoA = N-terminal N(alpha)-acetyl-L-seryl-[protein] + CoA + H(+). It carries out the reaction N-terminal L-valyl-[protein] + acetyl-CoA = N-terminal N(alpha)-acetyl-L-valyl-[protein] + CoA + H(+). It catalyses the reaction N-terminal L-cysteinyl-[protein] + acetyl-CoA = N-terminal N(alpha)-acetyl-L-cysteinyl-[protein] + CoA + H(+). The enzyme catalyses N-terminal L-threonyl-[protein] + acetyl-CoA = N-terminal N(alpha)-acetyl-L-threonyl-[protein] + CoA + H(+). In terms of biological role, catalytic subunit of the N-terminal acetyltransferase A (NatA) complex which displays alpha (N-terminal) acetyltransferase activity. Acetylates amino termini that are devoid of initiator methionine. The alpha (N-terminal) acetyltransferase activity may be important for vascular, hematopoietic and neuronal growth and development. Without NAA15, displays epsilon (internal) acetyltransferase activity towards HIF1A, thereby promoting its degradation. Represses MYLK kinase activity by acetylation, and thus represses tumor cell migration. Acetylates, and stabilizes TSC2, thereby repressing mTOR activity and suppressing cancer development. Acetylates HSPA1A and HSPA1B at 'Lys-77' which enhances its chaperone activity and leads to preferential binding to co-chaperone HOPX. Acetylates HIST1H4A. Acts as a negative regulator of sister chromatid cohesion during mitosis. The polypeptide is N-alpha-acetyltransferase 10 (Naa10) (Mus musculus (Mouse)).